The primary structure comprises 223 residues: Large ribosomal subunit protein uL4 (223 aa).

The segment at 47–72 is disordered; it reads GTASTKTRGEVAGGGRKPWPQKHTGR.

This sequence belongs to the universal ribosomal protein uL4 family. As to quaternary structure, part of the 50S ribosomal subunit.

One of the primary rRNA binding proteins, this protein initially binds near the 5'-end of the 23S rRNA. It is important during the early stages of 50S assembly. It makes multiple contacts with different domains of the 23S rRNA in the assembled 50S subunit and ribosome. Its function is as follows. Forms part of the polypeptide exit tunnel. The sequence is that of Large ribosomal subunit protein uL4 from Fervidobacterium nodosum (strain ATCC 35602 / DSM 5306 / Rt17-B1).